We begin with the raw amino-acid sequence, 215 residues long: Probable phosphoglycerate mutase GpmB (215 aa).

Residues Arg8 to Asn15, Gln21 to Gly22, Arg58, Lys60, Glu82 to Met85, Arg104 to Arg105, and Gly151 to Ile152 each bind substrate. His9 acts as the Tele-phosphohistidine intermediate in catalysis. Catalysis depends on Glu82, which acts as the Proton donor/acceptor.

Belongs to the phosphoglycerate mutase family. GpmB subfamily.

It catalyses the reaction (2R)-2-phosphoglycerate = (2R)-3-phosphoglycerate. Its pathway is carbohydrate degradation; glycolysis; pyruvate from D-glyceraldehyde 3-phosphate: step 3/5. In Salmonella typhi, this protein is Probable phosphoglycerate mutase GpmB.